The sequence spans 1916 residues: Diacylglycerol kinase eta (1916 aa).

Positions 1–36 (MAHIKLDTLDVVQRPGTTRRSNSNSGRSSACSSGSL) are disordered. Residues 19 to 36 (RRSNSNSGRSSACSSGSL) show a composition bias toward low complexity. A PH domain is found at 82-175 (AIIKEGFLLK…WLGSLKTATT (94 aa)). 2 consecutive Phorbol-ester/DAG-type zinc fingers follow at residues 195–245 (HHHW…IANC) and 268–319 (PHQW…AVAC). The 137-residue stretch at 350–486 (GNFSPLLVFV…DRWSIMVFEK (137 aa)) folds into the DAGKc domain. Over residues 623–644 (DEINTKERRSSRSLRSSEKEAL) the composition is skewed to basic and acidic residues. 4 disordered regions span residues 623 to 648 (DEIN…QSRA), 846 to 874 (DRGK…KEDN), 1018 to 1067 (TLCS…DDNP), and 1183 to 1214 (TSTS…SVKP). The region spanning 1853-1916 (WSVNEVVTWL…LQAIKDLSEN (64 aa)) is the SAM domain.

Belongs to the eukaryotic diacylglycerol kinase family.

The protein resides in the cytoplasm. It carries out the reaction a 1,2-diacyl-sn-glycerol + ATP = a 1,2-diacyl-sn-glycero-3-phosphate + ADP + H(+). Functionally, phosphorylates diacylglycerol (DAG) to generate phosphatidic acid (PA). This chain is Diacylglycerol kinase eta, found in Drosophila ananassae (Fruit fly).